Here is a 225-residue protein sequence, read N- to C-terminus: Ribose-5-phosphate isomerase A (225 aa).

Substrate-binding positions include 33-36 (TGST), 86-89 (DGAD), and 99-102 (KGGG). The Proton acceptor role is filled by Glu108. Lys126 contacts substrate.

It belongs to the ribose 5-phosphate isomerase family. As to quaternary structure, homodimer.

The catalysed reaction is aldehydo-D-ribose 5-phosphate = D-ribulose 5-phosphate. Its pathway is carbohydrate degradation; pentose phosphate pathway; D-ribose 5-phosphate from D-ribulose 5-phosphate (non-oxidative stage): step 1/1. Its function is as follows. Catalyzes the reversible conversion of ribose-5-phosphate to ribulose 5-phosphate. The polypeptide is Ribose-5-phosphate isomerase A (Bordetella petrii (strain ATCC BAA-461 / DSM 12804 / CCUG 43448)).